The chain runs to 279 residues: Shikimate dehydrogenase (NADP(+)) (279 aa).

Shikimate contacts are provided by residues 20–22 and threonine 67; that span reads SRS. Lysine 71 (proton acceptor) is an active-site residue. Aspartate 83 contributes to the NADP(+) binding site. Shikimate is bound by residues asparagine 92 and aspartate 108. NADP(+) contacts are provided by residues 134–138 and leucine 223; that span reads GAGGA. Tyrosine 225 provides a ligand contact to shikimate. Glycine 246 provides a ligand contact to NADP(+).

It belongs to the shikimate dehydrogenase family. As to quaternary structure, homodimer.

The enzyme catalyses shikimate + NADP(+) = 3-dehydroshikimate + NADPH + H(+). It functions in the pathway metabolic intermediate biosynthesis; chorismate biosynthesis; chorismate from D-erythrose 4-phosphate and phosphoenolpyruvate: step 4/7. In terms of biological role, involved in the biosynthesis of the chorismate, which leads to the biosynthesis of aromatic amino acids. Catalyzes the reversible NADPH linked reduction of 3-dehydroshikimate (DHSA) to yield shikimate (SA). The sequence is that of Shikimate dehydrogenase (NADP(+)) from Cereibacter sphaeroides (strain ATCC 17023 / DSM 158 / JCM 6121 / CCUG 31486 / LMG 2827 / NBRC 12203 / NCIMB 8253 / ATH 2.4.1.) (Rhodobacter sphaeroides).